Consider the following 244-residue polypeptide: uncharacterized protein (244 aa).

The HTH gntR-type domain maps to 7 to 74 (VKEKDQVVAH…YHRGAFIERF (68 aa)). The H-T-H motif DNA-binding region spans 34-53 (RNEIAHGLGVSRVPIQEALV).

This is an uncharacterized protein from Mycobacterium tuberculosis (strain CDC 1551 / Oshkosh).